Here is a 350-residue protein sequence, read N- to C-terminus: Biotin synthase (350 aa).

The 228-residue stretch at 42–269 folds into the Radical SAM core domain; it reads NEVQVSTLCS…QSHVRLSAGR (228 aa). Cys-57, Cys-61, and Cys-64 together coordinate [4Fe-4S] cluster. The [2Fe-2S] cluster site is built by Cys-101, Cys-132, Cys-192, and Arg-264.

This sequence belongs to the radical SAM superfamily. Biotin synthase family. Homodimer. The cofactor is [4Fe-4S] cluster. [2Fe-2S] cluster serves as cofactor.

It catalyses the reaction (4R,5S)-dethiobiotin + (sulfur carrier)-SH + 2 reduced [2Fe-2S]-[ferredoxin] + 2 S-adenosyl-L-methionine = (sulfur carrier)-H + biotin + 2 5'-deoxyadenosine + 2 L-methionine + 2 oxidized [2Fe-2S]-[ferredoxin]. Its pathway is cofactor biosynthesis; biotin biosynthesis; biotin from 7,8-diaminononanoate: step 2/2. Its function is as follows. Catalyzes the conversion of dethiobiotin (DTB) to biotin by the insertion of a sulfur atom into dethiobiotin via a radical-based mechanism. This chain is Biotin synthase, found in Saccharophagus degradans (strain 2-40 / ATCC 43961 / DSM 17024).